The chain runs to 312 residues: Pyridoxal kinase (312 aa).

Residue Met1 is modified to N-acetylmethionine. Pyridoxal contacts are provided by Ser12 and Thr47. Thr47 contacts pyridoxal 5'-phosphate. Ser59 bears the Phosphoserine mark. Residue Asp113 participates in ATP binding. Asp113 contributes to the Na(+) binding site. Position 118 (Asp118) interacts with Mg(2+). Thr148 contributes to the Na(+) binding site. 150 to 153 (NQFE) is a binding site for ATP. Residue Ser164 is modified to Phosphoserine. Thr186 provides a ligand contact to Na(+). 186 to 187 (TS) serves as a coordination point for ATP. At Ser213 the chain carries Phosphoserine. ATP contacts are provided by residues 226–228 (VDA) and Thr233. A pyridoxal 5'-phosphate-binding site is contributed by 234-235 (GD). Residue Asp235 is the Proton acceptor of the active site. The residue at position 285 (Ser285) is a Phosphoserine.

This sequence belongs to the pyridoxine kinase family. As to quaternary structure, homodimer. Mg(2+) serves as cofactor. Zn(2+) is required as a cofactor. The cofactor is Co(2+). It depends on Mn(2+) as a cofactor. In terms of tissue distribution, ubiquitous. Highly expressed in testis. In adult testis and spermatozoa.

Its subcellular location is the cytoplasm. It localises to the cytosol. It carries out the reaction pyridoxal + ATP = pyridoxal 5'-phosphate + ADP + H(+). The catalysed reaction is pyridoxamine + ATP = pyridoxamine 5'-phosphate + ADP + H(+). The enzyme catalyses pyridoxine + ATP = pyridoxine 5'-phosphate + ADP + H(+). It participates in cofactor metabolism; pyridoxal 5'-phosphate salvage; pyridoxal 5'-phosphate from pyridoxal: step 1/1. Its pathway is cofactor metabolism; pyridoxal 5'-phosphate salvage; pyridoxine 5'-phosphate from pyridoxine: step 1/1. The protein operates within cofactor metabolism; pyridoxal 5'-phosphate salvage; pyridoxamine 5'-phosphate from pyridoxamine: step 1/1. Catalytic activity is inhibited competitively by 4-deoxypyridoxine, and is also inhibited by the benzodiazepine receptor ligands 1012S and ethyl-beta-carboline-3-carboxylate. Inhibited by ginkgotoxin, theophylline, lamotrigine, enprofylline, theobromine, and caffeine. Activity is increased in the presence of K(+)or Na(+). In terms of biological role, catalyzes the phosphorylation of the dietary vitamin B6 vitamers pyridoxal (PL), pyridoxine (PN) and pyridoxamine (PM) to form pyridoxal 5'-phosphate (PLP), pyridoxine 5'-phosphate (PNP) and pyridoxamine 5'-phosphate (PMP), respectively. PLP is the active form of vitamin B6, and acts as a cofactor for over 140 different enzymatic reactions. The protein is Pyridoxal kinase of Homo sapiens (Human).